Reading from the N-terminus, the 525-residue chain is M-phase inducer phosphatase 1 (525 aa).

A Phosphodegron motif is present at residues 73 to 83 (MGSSESTDSGF). A Phosphoserine; by CHEK1 modification is found at S75. 3 positions are modified to phosphoserine; by NEK11: S78, S81, and S87. Phosphoserine is present on S106. A Phosphoserine; by CHEK1 and CHEK2 modification is found at S123. The KEN box signature appears at 140–142 (KEN). S177 carries the post-translational modification Phosphoserine; by CHEK1. 2 disordered regions span residues 179-204 (PARM…PQSP) and 262-308 (SASC…PEKP). 2 positions are modified to phosphoserine; by CHEK1 and CHEK2: S279 and S293. Over residues 294–306 (VAGASPEEAASPE) the composition is skewed to low complexity. S322 is subject to Phosphoserine. One can recognise a Rhodanese domain in the interval 377 to 483 (LIKEFVIIDC…FFLKCQSHCE (107 aa)). C432 is an active-site residue. T508 carries the phosphothreonine; by CHEK1 modification. Phosphoserine; by PLK3 is present on residues S514 and S520.

Belongs to the MPI phosphatase family. As to quaternary structure, interacts with CCNB1/cyclin B1. Interacts with YWHAE/14-3-3 epsilon when phosphorylated. Interacts with CUL1 specifically when CUL1 is neddylated and active. Interacts with BTRC/BTRCP1 and FBXW11/BTRCP2. Interactions with CUL1, BTRC and FBXW11 are enhanced upon DNA damage. Interacts with HSP90AB1; prevents heat shock-mediated CDC25A degradation and contributes to cell cycle progression. In terms of processing, phosphorylated by CHEK1 on Ser-75, Ser-123, Ser-177, Ser-279, Ser-293 and Thr-508 during checkpoint mediated cell cycle arrest. Also phosphorylated by CHEK2 on Ser-123, Ser-279, and Ser-293 during checkpoint mediated cell cycle arrest. Phosphorylation on Ser-177 and Thr-508 creates binding sites for YWHAE/14-3-3 epsilon which inhibits CDC25A. Phosphorylation on Ser-75, Ser-123, Ser-177, Ser-279 and Ser-293 may also promote ubiquitin-dependent proteolysis of CDC25A by the SCF complex. Phosphorylation of CDC25A at Ser-75 by CHEK1 primes it for subsequent phosphorylation at Ser-78, Ser-81 and Ser-87 by NEK11. Phosphorylation by NEK11 is required for BTRC-mediated polyubiquitination and degradation. Phosphorylation by PIM1 leads to an increase in phosphatase activity. Phosphorylated by PLK3 following DNA damage, leading to promote its ubiquitination and degradation. Ubiquitinated by the anaphase promoting complex/cyclosome (APC/C) ubiquitin ligase complex that contains FZR1/CDH1 during G1 phase leading to its degradation by the proteasome. Ubiquitinated by a SCF complex containing BTRC and FBXW11 during S phase leading to its degradation by the proteasome. Deubiquitination by USP17L2/DUB3 leads to its stabilization.

It catalyses the reaction O-phospho-L-tyrosyl-[protein] + H2O = L-tyrosyl-[protein] + phosphate. Stimulated by B-type cyclins. Stimulated by PIM1-mediated phosphorylation. In terms of biological role, tyrosine protein phosphatase which functions as a dosage-dependent inducer of mitotic progression. Directly dephosphorylates CDK1 and stimulates its kinase activity. Also dephosphorylates CDK2 in complex with cyclin-E, in vitro. The chain is M-phase inducer phosphatase 1 (CDC25A) from Bos taurus (Bovine).